A 158-amino-acid polypeptide reads, in one-letter code: Large ribosomal subunit protein uL11 (158 aa).

The segment at 1–28 is disordered; it reads MAGTIEALVPGGQATPGPPLGPELGPTP.

It belongs to the universal ribosomal protein uL11 family. Part of the ribosomal stalk of the 50S ribosomal subunit. Interacts with L10 and the large rRNA to form the base of the stalk. L10 forms an elongated spine to which L12 dimers bind in a sequential fashion forming a multimeric L10(L12)X complex.

Forms part of the ribosomal stalk which helps the ribosome interact with GTP-bound translation factors. This is Large ribosomal subunit protein uL11 from Halorubrum lacusprofundi (strain ATCC 49239 / DSM 5036 / JCM 8891 / ACAM 34).